The sequence spans 295 residues: Nucleotide-binding protein BH3569 (295 aa).

14–21 (GMSGAGKT) lines the ATP pocket. Position 65-68 (65-68 (DLRG)) interacts with GTP.

Belongs to the RapZ-like family.

Displays ATPase and GTPase activities. The chain is Nucleotide-binding protein BH3569 from Halalkalibacterium halodurans (strain ATCC BAA-125 / DSM 18197 / FERM 7344 / JCM 9153 / C-125) (Bacillus halodurans).